Here is a 439-residue protein sequence, read N- to C-terminus: Vitellogenin-1 (439 aa).

A signal peptide spans 1-20; that stretch reads MNPMRVLSLLACLAVAALAK. The segment covering 158–175 has biased composition (polar residues); it reads QQQRQHGKNGNQDYQDQS. Disordered stretches follow at residues 158-196 and 407-439; these read QQQR…EVKN and KSPF…KDYQ. Position 171 is a phosphotyrosine (Tyr171). Residues Ser175, Ser185, and Ser186 each carry the phosphoserine modification. The residue at position 190 (Tyr190) is a Phosphotyrosine. Ser191 is modified (phosphoserine). Residues 416 to 433 show a composition bias toward polar residues; that stretch reads AQKQSSYHGVHQAWNTNQ. At Ser435 the chain carries Phosphoserine.

Belongs to the AB hydrolase superfamily. Lipase family. Tyrosine sulfation occurs in the female only and plays an essential functional role. Expressed in females only.

It is found in the secreted. It localises to the vesicle. Vitellogenin is the major yolk protein of eggs where it is used as a food source during embryogenesis. Along with Yp2 and Yp3, and their receptor yl/yolkless, required for maintenance of microtubule plus-end orientation towards the posterior pole of oocytes. Involved in polarized localization of germ plasm components, such as osk mRNA and vas protein, to the oocyte posterior cortex. Receptor-mediated endocytosis by yl/yolkless is crucial for actin reorganization, mediated by osk isoform A/Long, required to anchor germ plasm components to the oocyte cortex. The chain is Vitellogenin-1 (Yp1) from Drosophila melanogaster (Fruit fly).